The chain runs to 208 residues: Outer-membrane lipoprotein carrier protein (208 aa).

Residues 1–22 (MKKRLCAVLLASPLLFSAAVFA) form the signal peptide.

This sequence belongs to the LolA family. As to quaternary structure, monomer.

The protein resides in the periplasm. Its function is as follows. Participates in the translocation of lipoproteins from the inner membrane to the outer membrane. Only forms a complex with a lipoprotein if the residue after the N-terminal Cys is not an aspartate (The Asp acts as a targeting signal to indicate that the lipoprotein should stay in the inner membrane). The polypeptide is Outer-membrane lipoprotein carrier protein (Shewanella baltica (strain OS223)).